The chain runs to 37 residues: Large ribosomal subunit protein bL36 (37 aa).

Belongs to the bacterial ribosomal protein bL36 family.

This Colwellia psychrerythraea (strain 34H / ATCC BAA-681) (Vibrio psychroerythus) protein is Large ribosomal subunit protein bL36.